The following is a 122-amino-acid chain: Large ribosomal subunit protein bL12 (122 aa).

Belongs to the bacterial ribosomal protein bL12 family. As to quaternary structure, homodimer. Part of the ribosomal stalk of the 50S ribosomal subunit. Forms a multimeric L10(L12)X complex, where L10 forms an elongated spine to which 2 to 4 L12 dimers bind in a sequential fashion. Binds GTP-bound translation factors.

Its function is as follows. Forms part of the ribosomal stalk which helps the ribosome interact with GTP-bound translation factors. Is thus essential for accurate translation. In Blochmanniella pennsylvanica (strain BPEN), this protein is Large ribosomal subunit protein bL12.